Consider the following 201-residue polypeptide: Putative 3-methyladenine DNA glycosylase (201 aa).

This sequence belongs to the DNA glycosylase MPG family.

The chain is Putative 3-methyladenine DNA glycosylase from Trichodesmium erythraeum (strain IMS101).